Reading from the N-terminus, the 991-residue chain is Nonsense-mediated mRNA decay factor SMG8 (991 aa).

3 disordered regions span residues 18–41 (LGSE…PEPP), 100–129 (GEAG…NRAE), and 278–299 (EPPR…PKRR). Phosphoserine is present on serine 115. Residues 278-289 (EPPRSQDTAHPD) show a composition bias toward basic and acidic residues. Residues 290–299 (KPKKHSPKRR) show a composition bias toward basic residues. Phosphoserine occurs at positions 469 and 668. Residues 653–738 (FEPSTPDPAP…KSEKRPNLVD (86 aa)) are disordered. Over residues 675-684 (DAEKLKEKEP) the composition is skewed to basic and acidic residues. The segment covering 685–706 (QTQGESTSLSLALSLGQSTDSL) has biased composition (polar residues). Residues 720–736 (PEVHGQGEGKSEKRPNL) are compositionally biased toward basic and acidic residues. Residues serine 742 and serine 895 each carry the phosphoserine modification. At arginine 898 the chain carries Omega-N-methylarginine.

It belongs to the SMG8 family. Component of the SMG1C complex composed of SMG1, SMG8 and SMG9; the recruitment of SMG8 to SMG1 N-terminus induces a large conformational change in the SMG1 C-terminal head domain containing the catalytic domain. Forms heterodimers with SMG9; this assembly form may represent a SMG1C intermediate form. In terms of processing, phosphorylated by SMG1.

Functionally, involved in nonsense-mediated decay (NMD) of mRNAs containing premature stop codons. Is recruited by release factors to stalled ribosomes together with SMG1 and SMG9 (forming the SMG1C protein kinase complex) and, in the SMG1C complex, is required to mediate the recruitment of SMG1 to the ribosome:SURF complex and to suppress SMG1 kinase activity until the ribosome:SURF complex locates the exon junction complex (EJC). Acts as a regulator of kinase activity. The sequence is that of Nonsense-mediated mRNA decay factor SMG8 (Smg8) from Mus musculus (Mouse).